The chain runs to 250 residues: Putative (5-formylfuran-3-yl)methyl phosphate synthase (250 aa).

The Schiff-base intermediate with substrate role is filled by Lys29. The active-site Proton acceptor is the Lys87.

Belongs to the MfnB family.

The catalysed reaction is 2 D-glyceraldehyde 3-phosphate = 4-(hydroxymethyl)-2-furancarboxaldehyde phosphate + phosphate + 2 H2O. Its function is as follows. Catalyzes the formation of 4-(hydroxymethyl)-2-furancarboxaldehyde phosphate (4-HFC-P) from two molecules of glyceraldehyde-3-P (GA-3-P). The sequence is that of Putative (5-formylfuran-3-yl)methyl phosphate synthase from Streptomyces griseus subsp. griseus (strain JCM 4626 / CBS 651.72 / NBRC 13350 / KCC S-0626 / ISP 5235).